The primary structure comprises 1081 residues: Carbamoyl phosphate synthase large chain (1081 aa).

The tract at residues 1–403 (MPRRNDLNKI…SFQKALRSLE (403 aa)) is carboxyphosphate synthetic domain. Residues Arg-129, Arg-170, Gly-177, Lys-209, Leu-211, Glu-216, Gly-242, Val-243, His-244, Gln-286, and Glu-300 each coordinate ATP. Residues 133-329 (KEAMARIGVP…IAKFAAKLAV (197 aa)) form the ATP-grasp 1 domain. Mg(2+) contacts are provided by Gln-286, Glu-300, and Asn-302. Positions 286, 300, and 302 each coordinate Mn(2+). Residues 404–553 (TGRFGFGCDR…STYEPEECEV (150 aa)) are oligomerization domain. The carbamoyl phosphate synthetic domain stretch occupies residues 554-944 (LPSDKPKVMI…AFAKAELGAG (391 aa)). Residues 686–878 (EKILHELEIS…LAKIASLVMS (193 aa)) enclose the ATP-grasp 2 domain. Residues Arg-722, Lys-761, Leu-763, Glu-768, Gly-794, Ile-795, His-796, Ser-797, Gln-837, and Glu-849 each contribute to the ATP site. The Mg(2+) site is built by Gln-837, Glu-849, and Asn-851. Mn(2+)-binding residues include Gln-837, Glu-849, and Asn-851. Residues 945–1081 (VILATTGTVF…DVKALQDYLG (137 aa)) form the MGS-like domain. Residues 945–1081 (VILATTGTVF…DVKALQDYLG (137 aa)) are allosteric domain.

It belongs to the CarB family. As to quaternary structure, composed of two chains; the small (or glutamine) chain promotes the hydrolysis of glutamine to ammonia, which is used by the large (or ammonia) chain to synthesize carbamoyl phosphate. Tetramer of heterodimers (alpha,beta)4. Requires Mg(2+) as cofactor. Mn(2+) is required as a cofactor.

It catalyses the reaction hydrogencarbonate + L-glutamine + 2 ATP + H2O = carbamoyl phosphate + L-glutamate + 2 ADP + phosphate + 2 H(+). The enzyme catalyses hydrogencarbonate + NH4(+) + 2 ATP = carbamoyl phosphate + 2 ADP + phosphate + 2 H(+). It functions in the pathway amino-acid biosynthesis; L-arginine biosynthesis; carbamoyl phosphate from bicarbonate: step 1/1. Its pathway is pyrimidine metabolism; UMP biosynthesis via de novo pathway; (S)-dihydroorotate from bicarbonate: step 1/3. Large subunit of the glutamine-dependent carbamoyl phosphate synthetase (CPSase). CPSase catalyzes the formation of carbamoyl phosphate from the ammonia moiety of glutamine, carbonate, and phosphate donated by ATP, constituting the first step of 2 biosynthetic pathways, one leading to arginine and/or urea and the other to pyrimidine nucleotides. The large subunit (synthetase) binds the substrates ammonia (free or transferred from glutamine from the small subunit), hydrogencarbonate and ATP and carries out an ATP-coupled ligase reaction, activating hydrogencarbonate by forming carboxy phosphate which reacts with ammonia to form carbamoyl phosphate. This is Carbamoyl phosphate synthase large chain from Synechocystis sp. (strain ATCC 27184 / PCC 6803 / Kazusa).